We begin with the raw amino-acid sequence, 478 residues long: Transposase for insertion sequence element IS231C (478 aa).

Belongs to the transposase 11 family.

Its function is as follows. Involved in the transposition of the insertion sequence. This chain is Transposase for insertion sequence element IS231C, found in Bacillus thuringiensis subsp. berliner.